The chain runs to 208 residues: Imidazoleglycerol-phosphate dehydratase (208 aa).

The disordered stretch occupies residues 1–22; sequence MTRRAAVKAPRAGAAARRGSVA. Residues 7-19 show a composition bias toward low complexity; that stretch reads VKAPRAGAAARRG.

This sequence belongs to the imidazoleglycerol-phosphate dehydratase family.

The protein localises to the cytoplasm. The catalysed reaction is D-erythro-1-(imidazol-4-yl)glycerol 3-phosphate = 3-(imidazol-4-yl)-2-oxopropyl phosphate + H2O. The protein operates within amino-acid biosynthesis; L-histidine biosynthesis; L-histidine from 5-phospho-alpha-D-ribose 1-diphosphate: step 6/9. This is Imidazoleglycerol-phosphate dehydratase from Anaeromyxobacter dehalogenans (strain 2CP-C).